The chain runs to 398 residues: Argininosuccinate synthase (398 aa).

8 to 16 (AYSGGLDTS) is a binding site for ATP. Y87 contributes to the L-citrulline binding site. Residue G117 coordinates ATP. T119, N123, and D124 together coordinate L-aspartate. N123 is an L-citrulline binding site. Positions 127, 175, 260, and 272 each coordinate L-citrulline.

It belongs to the argininosuccinate synthase family. Type 1 subfamily. In terms of assembly, homotetramer.

Its subcellular location is the cytoplasm. The catalysed reaction is L-citrulline + L-aspartate + ATP = 2-(N(omega)-L-arginino)succinate + AMP + diphosphate + H(+). The protein operates within amino-acid biosynthesis; L-arginine biosynthesis; L-arginine from L-ornithine and carbamoyl phosphate: step 2/3. This Mycobacterium ulcerans (strain Agy99) protein is Argininosuccinate synthase.